A 163-amino-acid chain; its full sequence is Nucleotide-binding protein NFA_51200 (163 aa).

The protein belongs to the YajQ family.

In terms of biological role, nucleotide-binding protein. This Nocardia farcinica (strain IFM 10152) protein is Nucleotide-binding protein NFA_51200.